Reading from the N-terminus, the 400-residue chain is Acetate kinase (400 aa).

Asparagine 10 lines the Mg(2+) pocket. Lysine 17 contacts ATP. Position 91 (arginine 91) interacts with substrate. Aspartate 148 (proton donor/acceptor) is an active-site residue. ATP contacts are provided by residues 208–212 (HLGNG), 283–285 (DCR), and 331–335 (GIGEN). Position 385 (glutamate 385) interacts with Mg(2+).

The protein belongs to the acetokinase family. Homodimer. Mg(2+) serves as cofactor. Mn(2+) is required as a cofactor.

The protein localises to the cytoplasm. It catalyses the reaction acetate + ATP = acetyl phosphate + ADP. Its pathway is metabolic intermediate biosynthesis; acetyl-CoA biosynthesis; acetyl-CoA from acetate: step 1/2. In terms of biological role, catalyzes the formation of acetyl phosphate from acetate and ATP. Can also catalyze the reverse reaction. The protein is Acetate kinase of Shewanella putrefaciens (strain CN-32 / ATCC BAA-453).